Here is a 303-residue protein sequence, read N- to C-terminus: MTIIKQEKTLFFFKNLQNIICNTFSKIDGKSLFKEDMWNTKKGYGRTRILKKGKVFEQVSVNFSHVFGKSLPKSSSNKKRDLENCSYQASGISVVSHPKNPYVPTSHLNIRFFLAKNKKRKTIWWFGGGFDLTPYYGFYQDVIHWHTIAKKICQPFGDDIYFKYKKWCDDYFFIKHRNESRGIGGLFFDDLCLPDFHSAFLFSKSIGKGYIDAYFPIVNLRKSYSWGSRERNFQLYRRGRYVEFNLLLDRGTLFGIQSNGRIESILSSMPPLVKWEYGWHPKPNSPESKLYTDFLPIKDWIDK.

Ser-93 contacts substrate. Positions 97 and 107 each coordinate a divalent metal cation. Residue His-107 is the Proton donor of the active site. 109-111 (NIR) is a binding site for substrate. Positions 146 and 176 each coordinate a divalent metal cation. An important for dimerization region spans residues 241–276 (YVEFNLLLDRGTLFGIQSNGRIESILSSMPPLVKWE).

This sequence belongs to the aerobic coproporphyrinogen-III oxidase family. Homodimer. Requires a divalent metal cation as cofactor.

The protein resides in the cytoplasm. The enzyme catalyses coproporphyrinogen III + O2 + 2 H(+) = protoporphyrinogen IX + 2 CO2 + 2 H2O. The protein operates within porphyrin-containing compound metabolism; protoporphyrin-IX biosynthesis; protoporphyrinogen-IX from coproporphyrinogen-III (O2 route): step 1/1. Its function is as follows. Involved in the heme biosynthesis. Catalyzes the aerobic oxidative decarboxylation of propionate groups of rings A and B of coproporphyrinogen-III to yield the vinyl groups in protoporphyrinogen-IX. This Wigglesworthia glossinidia brevipalpis protein is Oxygen-dependent coproporphyrinogen-III oxidase.